Consider the following 473-residue polypeptide: Trigger factor (473 aa).

In terms of domain architecture, PPIase FKBP-type spans 171–256 (GDRVTIDFVG…VTKIQAAGEA (86 aa)). Residues 439 to 473 (KEALFADEDGDDTTGGKPADKAEAKDESKTEAKAD) form a disordered region. A compositionally biased stretch (basic and acidic residues) spans 456 to 473 (PADKAEAKDESKTEAKAD).

Belongs to the FKBP-type PPIase family. Tig subfamily.

Its subcellular location is the cytoplasm. It carries out the reaction [protein]-peptidylproline (omega=180) = [protein]-peptidylproline (omega=0). Involved in protein export. Acts as a chaperone by maintaining the newly synthesized protein in an open conformation. Functions as a peptidyl-prolyl cis-trans isomerase. This is Trigger factor from Methylobacterium radiotolerans (strain ATCC 27329 / DSM 1819 / JCM 2831 / NBRC 15690 / NCIMB 10815 / 0-1).